A 152-amino-acid chain; its full sequence is SKP1-like protein 11 (152 aa).

Positions 94–152 are interaction with the F-box domain of F-box proteins; sequence ILAANYLNIKSLLDLTCQTVADMIKGKTPEEIRSTFNIENDFTPEEEEAVRKENQWAFE.

The protein belongs to the SKP1 family. As to quaternary structure, part of a SCF (SKP1-cullin-F-box) protein ligase complex. Interacts with ADO3/FKF1, COI1/FBL2, EBF1/FBL6, PP2A13, PP2B10, UFO, SKIP2, SKIP15, SKIP16, SKIP32, CPR1/CPR30, At1g55000, At1g67340, At1g78100, At3g04660, At3g16740, At3g61590, At4g38940 and At5g49610. In terms of tissue distribution, expressed in young seedlings, cotyledons, roots, leaves, floral stems, inflorescences, pollen, and siliques, with a slightly higher level in inflorescence than in other tissues.

It localises to the nucleus. It participates in protein modification; protein ubiquitination. In terms of biological role, involved in ubiquitination and subsequent proteasomal degradation of target proteins. Together with CUL1, RBX1 and a F-box protein, it forms a SCF E3 ubiquitin ligase complex. The functional specificity of this complex depends on the type of F-box protein. In the SCF complex, it serves as an adapter that links the F-box protein to CUL1. Plays a role during early flowers reproductive development. The protein is SKP1-like protein 11 (ASK11) of Arabidopsis thaliana (Mouse-ear cress).